The following is a 257-amino-acid chain: Ribonuclease PH (257 aa).

Residues R86 and 124–126 (GTR) contribute to the phosphate site.

Belongs to the RNase PH family. As to quaternary structure, homohexameric ring arranged as a trimer of dimers.

The enzyme catalyses tRNA(n+1) + phosphate = tRNA(n) + a ribonucleoside 5'-diphosphate. Its function is as follows. Phosphorolytic 3'-5' exoribonuclease that plays an important role in tRNA 3'-end maturation. Removes nucleotide residues following the 3'-CCA terminus of tRNAs; can also add nucleotides to the ends of RNA molecules by using nucleoside diphosphates as substrates, but this may not be physiologically important. Probably plays a role in initiation of 16S rRNA degradation (leading to ribosome degradation) during starvation. The chain is Ribonuclease PH from Halalkalibacterium halodurans (strain ATCC BAA-125 / DSM 18197 / FERM 7344 / JCM 9153 / C-125) (Bacillus halodurans).